The chain runs to 234 residues: Glycoprotein BDLF3 (234 aa).

The first 28 residues, 1-28 (MAHARDKAGAVMAMILICETSLIWTSSG), serve as a signal peptide directing secretion. The tract at residues 29–62 (SSTASAGNVTGTTAVTTPSPSASGPSTNQSTTLT) is disordered. 9 N-linked (GlcNAc...) asparagine; by host glycosylation sites follow: N36, N56, N77, N96, N101, N110, N127, N144, and N159. Positions 116–138 (AGTGTSTGVTSNVTTRSSSTTSA) are disordered. Residues 187–207 (LVFVGLTFLMLILIFAAGLMM) form a helical membrane-spanning segment.

It belongs to the Epstein-Barr virus BDLF3 protein family.

It is found in the membrane. In Homo sapiens (Human), this protein is Glycoprotein BDLF3.